The sequence spans 383 residues: MPLSLFRRLLLAALLLVIIWTLFGPSGIGEELLSLSLASLSPAPASPGPPLALPRLLIPNEKACGGPGSPPFLLILVCTAPENLNQRNAIRASWGGLREAQGFRVQILFLLGEPSLWHPTKEPHDIDLVREAAAQGDILQAAFRDSYRNLTLKTLSGLNWADKHCSMARYILKTDDDVFVNVPELVSELIRRGGHWEQWEKGKEPPRAVKAGDKEWEERPILKSQPMPLLYLGRVHWRVHPSRTPGSKHQISEEQWPPTWGPFPPYASGTGYVLSASAVQLILKVASRAPPLPLEDVFVGVSARRGGLTPTHCVKLAGATHYPLDRCCYGKFLLTSHKLDPWKMQEAWKLVGGSDGERTAPFCSWLQEVLGILRCRVIAWLHS.

The Cytoplasmic segment spans residues 1–8 (MPLSLFRR). Residues 9 to 29 (LLLAALLLVIIWTLFGPSGIG) traverse the membrane as a helical segment. Over 30 to 383 (EELLSLSLAS…RCRVIAWLHS (354 aa)) the chain is Lumenal. Residue asparagine 149 is glycosylated (N-linked (GlcNAc...) asparagine).

This sequence belongs to the glycosyltransferase 31 family.

It is found in the golgi apparatus membrane. It carries out the reaction a ganglioside GM2 (d18:1(4E)) + UDP-alpha-D-galactose = a ganglioside GM1 (d18:1(4E)) + UDP + H(+). The catalysed reaction is a ganglioside GM2 + UDP-alpha-D-galactose = a ganglioside GM1 + UDP + H(+). The enzyme catalyses a ganglioside GD2 (d18:1(4E)) + UDP-alpha-D-galactose = a ganglioside GD1b (d18:1(4E)) + UDP + H(+). It catalyses the reaction a ganglioside GA2 (d18:1(4E)) + UDP-alpha-D-galactose = a ganglioside GA1 (d18:1(4E)) + UDP + H(+). Its pathway is protein modification; protein glycosylation. Its function is as follows. Involved in GM1/GD1B/GA1 ganglioside biosynthesis. This chain is Beta-1,3-galactosyltransferase 4 (B3GALT4), found in Canis lupus familiaris (Dog).